A 190-amino-acid polypeptide reads, in one-letter code: MNRVILLLSVMCVGVSSQPITENQRLFSIAVGRVQYLHLVAKKLFSDFENSLQLEDQRLLNKIASKEFCHSDNFLSPIDKHETQGSSVQKLLSVSYRLIESWEFFSRFLVASFAVRTQVTSKLSELKMGLLKLIEANQDGAGGFSESSVLQLTPYGNSELFACFKKDMHKVETYLTVAKCRLFPEANCTL.

The N-terminal stretch at 1–17 (MNRVILLLSVMCVGVSS) is a signal peptide. Intrachain disulfides connect Cys-69–Cys-163 and Cys-180–Cys-188.

It belongs to the somatotropin/prolactin family.

Its subcellular location is the secreted. Functionally, growth hormone plays an important role in growth control and is involved in the regulation of several anabolic processes. Implicated as an osmoregulatory substance important for seawater adaptation. This is Somatotropin (gh) from Paralichthys olivaceus (Bastard halibut).